Reading from the N-terminus, the 143-residue chain is Transcription antitermination protein NusB (143 aa).

Belongs to the NusB family.

Functionally, involved in transcription antitermination. Required for transcription of ribosomal RNA (rRNA) genes. Binds specifically to the boxA antiterminator sequence of the ribosomal RNA (rrn) operons. The sequence is that of Transcription antitermination protein NusB from Buchnera aphidicola subsp. Acyrthosiphon pisum (strain APS) (Acyrthosiphon pisum symbiotic bacterium).